We begin with the raw amino-acid sequence, 862 residues long: C-type lectin domain-containing protein 161 (862 aa).

An N-terminal signal peptide occupies residues 1–20; the sequence is MYRRTTLWFLLLFQPILVFA. 2 N-linked (GlcNAc...) asparagine glycosylation sites follow: N22 and N91. The C-type lectin 1 domain maps to 41–154; the sequence is SLNACFKLYN…VGQKLPFVCT (114 aa). A disulfide bridge links C62 with C153. The interval 162-291 is disordered; that stretch reads AGPAPVHAMR…SDESSDEAYD (130 aa). Over residues 198–218 the composition is skewed to basic and acidic residues; it reads SDKKEKKEVASDKKKESKKDE. N-linked (GlcNAc...) asparagine glycosylation occurs at N222. Over residues 242–252 the composition is skewed to basic and acidic residues; sequence SDKKESSKKDE. N-linked (GlcNAc...) asparagine glycosylation is found at N258, N279, and N352. Positions 265–283 are enriched in low complexity; the sequence is ANAEMSASISASSANSSSD. 3 disordered regions span residues 377-437, 450-469, and 474-504; these read MTMR…SASL, ALAS…QKSA, and AVVS…IDES. The segment covering 388 to 418 has biased composition (low complexity); sequence SSSNTDSESASISESSQASEQAVMAAAMSAK. Composition is skewed to basic and acidic residues over residues 455–467 and 478–491; these read SKSD…KDQK and ENKH…DPKS. N559 carries N-linked (GlcNAc...) asparagine glycosylation. C-type lectin domains are found at residues 562 to 687 and 716 to 828; these read APAL…SVLC and KNGK…FVSV. Residues C653 and C678 are joined by a disulfide bond. N765 carries N-linked (GlcNAc...) asparagine glycosylation. A disulfide bridge links C807 with C819. N831 and N857 each carry an N-linked (GlcNAc...) asparagine glycan.

It is found in the secreted. This Caenorhabditis elegans protein is C-type lectin domain-containing protein 161 (clec-161).